The sequence spans 110 residues: Large ribosomal subunit protein uL22 (110 aa).

The protein belongs to the universal ribosomal protein uL22 family. Part of the 50S ribosomal subunit.

Its function is as follows. This protein binds specifically to 23S rRNA; its binding is stimulated by other ribosomal proteins, e.g. L4, L17, and L20. It is important during the early stages of 50S assembly. It makes multiple contacts with different domains of the 23S rRNA in the assembled 50S subunit and ribosome. The globular domain of the protein is located near the polypeptide exit tunnel on the outside of the subunit, while an extended beta-hairpin is found that lines the wall of the exit tunnel in the center of the 70S ribosome. In Solidesulfovibrio magneticus (strain ATCC 700980 / DSM 13731 / RS-1) (Desulfovibrio magneticus), this protein is Large ribosomal subunit protein uL22.